Here is a 351-residue protein sequence, read N- to C-terminus: Putative phospho-N-acetylmuramoyl-pentapeptide-transferase (351 aa).

10 helical membrane passes run 2–22 (MEFL…TLFI), 44–64 (AGTP…VTVL), 71–91 (LVLT…DDLL), 158–178 (GEKI…GAVG), 181–201 (GGFY…VGAI), 212–232 (GMAA…LGLS), 235–255 (ALPF…NRHP), 258–278 (IFMG…AVML), 281–301 (TVYF…VSLL), and 328–348 (IVLL…YMTG).

This sequence belongs to the glycosyltransferase 4 family. MraY subfamily. Mg(2+) is required as a cofactor.

It is found in the cell membrane. It catalyses the reaction UDP-N-acetyl-alpha-D-muramoyl-L-alanyl-gamma-D-glutamyl-meso-2,6-diaminopimeloyl-D-alanyl-D-alanine + di-trans,octa-cis-undecaprenyl phosphate = di-trans,octa-cis-undecaprenyl diphospho-N-acetyl-alpha-D-muramoyl-L-alanyl-D-glutamyl-meso-2,6-diaminopimeloyl-D-alanyl-D-alanine + UMP. In Methanothermobacter thermautotrophicus (strain ATCC 29096 / DSM 1053 / JCM 10044 / NBRC 100330 / Delta H) (Methanobacterium thermoautotrophicum), this protein is Putative phospho-N-acetylmuramoyl-pentapeptide-transferase.